The primary structure comprises 100 residues: Small ribosomal subunit protein uS14c (100 aa).

The protein belongs to the universal ribosomal protein uS14 family. As to quaternary structure, part of the 30S ribosomal subunit.

Its subcellular location is the plastid. The protein localises to the chloroplast. Its function is as follows. Binds 16S rRNA, required for the assembly of 30S particles. The chain is Small ribosomal subunit protein uS14c from Helianthus annuus (Common sunflower).